We begin with the raw amino-acid sequence, 234 residues long: Phosphoribosylaminoimidazole-succinocarboxamide synthase (234 aa).

The protein belongs to the SAICAR synthetase family.

The catalysed reaction is 5-amino-1-(5-phospho-D-ribosyl)imidazole-4-carboxylate + L-aspartate + ATP = (2S)-2-[5-amino-1-(5-phospho-beta-D-ribosyl)imidazole-4-carboxamido]succinate + ADP + phosphate + 2 H(+). Its pathway is purine metabolism; IMP biosynthesis via de novo pathway; 5-amino-1-(5-phospho-D-ribosyl)imidazole-4-carboxamide from 5-amino-1-(5-phospho-D-ribosyl)imidazole-4-carboxylate: step 1/2. The chain is Phosphoribosylaminoimidazole-succinocarboxamide synthase from Staphylococcus aureus (strain MRSA252).